Here is an 84-residue protein sequence, read N- to C-terminus: uncharacterized protein (84 aa).

Residues 25–45 traverse the membrane as a helical segment; sequence ILMTVAGFIIAFAILVFQISF.

It localises to the membrane. This is an uncharacterized protein from Bacillus anthracis.